The following is a 147-amino-acid chain: uncharacterized protein (147 aa).

Residues 72–81 show a composition bias toward low complexity; sequence ARAKPASRAP. The tract at residues 72-147 is disordered; the sequence is ARAKPASRAP…QGAAGRRLSP (76 aa).

This is an uncharacterized protein from Homo sapiens (Human).